The primary structure comprises 572 residues: Myb-like protein Y (572 aa).

A compositionally biased stretch (polar residues) spans 196–211; it reads QSQSQLPTATNNNNKQ. The interval 196–283 is disordered; sequence QSQSQLPTAT…NNNNNNNNNE (88 aa). 2 stretches are compositionally biased toward low complexity: residues 222-237 and 260-281; these read TATA…TTTT and NDNN…NNNN. Positions 311–360 constitute a Myb-like domain; sequence PWTVEDQKKLEDALTKYPPSRFSSVSRWQMVSKELGISPKAVALRYNQML. A disordered region spans residues 367–456; the sequence is KPSLQQQQQQ…TTVTPNMTTP (90 aa). Composition is skewed to low complexity over residues 371–392 and 414–425; these read QQQQ…TTTT and SSFSSPSSSSKE. The segment covering 426 to 435 has biased composition (basic and acidic residues); the sequence is SPNKKEKTTH. Over residues 436-455 the composition is skewed to low complexity; the sequence is DTTTTTNTATTTTVTPNMTT.

The protein is Myb-like protein Y (mybY) of Dictyostelium discoideum (Social amoeba).